The following is a 1429-amino-acid chain: Nitric oxide synthase 1 (1429 aa).

The interval Met1–Leu200 is interaction with NOSIP. The PDZ domain occupies Ser17 to Gly99. Disordered regions lie at residues Asp114 to Gln174 and Asn271 to Pro298. Residues Gln163–Asp240 form an interaction with DYNLL1/PIN region. Over residues Asn272–Pro294 the composition is skewed to polar residues. Ser280 carries the post-translational modification Phosphoserine. Ser334 is a binding site for (6R)-L-erythro-5,6,7,8-tetrahydrobiopterin. Position 415 (Cys415) interacts with heme b. L-arginine-binding residues include Gln478, Trp587, Tyr588, and Glu592. Residues Val677, Trp678, and Phe691 each coordinate (6R)-L-erythro-5,6,7,8-tetrahydrobiopterin. A heme b-binding site is contributed by Tyr706. A calmodulin-binding region spans residues Lys725–Met745. Residues Ala755–Phe935 enclose the Flavodoxin-like domain. Thr761, Glu762, Thr763, Lys765, Ser766, Ser807, Thr808, and Gly812 together coordinate FMN. Phosphoserine is present on residues Ser847, Ser857, and Ser858. Residues Ser886, His891, Cys893, Glu919, and Gln923 each coordinate FMN. Residues Lys990–Pro1237 enclose the FAD-binding FR-type domain. Arg1010 provides a ligand contact to NADP(+). FAD contacts are provided by His1032, Arg1173, Tyr1174, Tyr1175, Ser1176, Thr1191, and Ala1193. Residue Ser1196 coordinates NADP(+). FAD-binding residues include Tyr1197, Val1210, Cys1211, and Ser1212. NADP(+)-binding residues include Thr1251, Arg1284, Ser1313, Arg1314, Lys1320, Tyr1322, Gln1324, Asp1357, Thr1398, and Arg1400.

It belongs to the NOS family. In terms of assembly, homodimer. Interacts with DLG4; the interaction possibly being prevented by the association between NOS1 and CAPON. Forms a ternary complex with CAPON and RASD1. Forms a ternary complex with CAPON and SYN1. Interacts with ZDHHC23. Interacts with NOSIP; which may impair its synaptic location. Interacts with HTR4. Interacts with VAC14. Interacts (via N-terminal domain) with DLG4 (via N-terminal tandem pair of PDZ domains). Interacts with SLC6A4. Forms a complex with ASL, ASS1 and SLC7A1; the complex regulates cell-autonomous L-arginine synthesis and citrulline recycling while channeling extracellular L-arginine to nitric oxide synthesis pathway. Interacts with DMD; localizes NOS1 to sarcolemma in muscle cells. Interacts with DYNLL1; inhibits the nitric oxide synthase activity. Heme b is required as a cofactor. The cofactor is FAD. Requires FMN as cofactor. (6R)-L-erythro-5,6,7,8-tetrahydrobiopterin serves as cofactor. Ubiquitinated; mediated by STUB1/CHIP in the presence of Hsp70 and Hsp40 (in vitro). Widely expressed in the nervous system: expressed in cerebrum, olfactory bulb, hippocampus, midbrain, cerebellum, pons, medulla oblongata, and spinal cord. Also found in skeletal muscle, where it is localized beneath the sarcolemma of fast twitch muscle fibers, and in spleen, heart, kidney, and liver. N-NOS-1 and N-NOS-2 are found in all parts of the nervous system. NNOS beta and gamma occur in a region-specific manner in the brain and NNOS beta expression is developmentally regulated. NNOS Mu is only found in mature skeletal and cardiac muscles.

It localises to the cell membrane. The protein localises to the sarcolemma. It is found in the cell projection. The protein resides in the dendritic spine. The enzyme catalyses 2 L-arginine + 3 NADPH + 4 O2 + H(+) = 2 L-citrulline + 2 nitric oxide + 3 NADP(+) + 4 H2O. With respect to regulation, stimulated by calcium/calmodulin. Inhibited by DYNLL1 that prevents the dimerization of the protein. Inhibited by NOSIP. Its function is as follows. Produces nitric oxide (NO) which is a messenger molecule with diverse functions throughout the body. In the brain and peripheral nervous system, NO displays many properties of a neurotransmitter. Probably has nitrosylase activity and mediates cysteine S-nitrosylation of cytoplasmic target proteins such SRR. Isoform NNOS Mu may be an effector enzyme for the dystrophin complex. The sequence is that of Nitric oxide synthase 1 from Mus musculus (Mouse).